The sequence spans 602 residues: MPFKPVAEAFASMERITSRTQLTLLLTRLFKSTPPGAIGIVVYLIQGKLGPDWKGLPELGVGEKLLVKAIALAYKATEERVERLYKSVGDLGSVAERLSREYRSRAARAVTLEAFMAGGGEALTVRRVYNTLYRIAMAQGEGSRDIKLRLLAGLLADAEPVEAKYIVRFVEGRLRVGVGDATVLDALAMAFGGGAHARPVIERAYNLRADLGYIAEVVAREGVDALRGVKPQVGVPIRPMLAERGRDPAEILRKVGGRAVVEYKYDGERAQIHKKDGEVYIYSRRLENITRMFPDVVEMARKGLKAGEAIVEGEIVAVDPDNYEIQPFQVLMQRKRKHDIHRVMREVPVAVFLFDALYVDGEDLTSKPLPERRRRLKEIVVETPLWRLAESIETSDPEELWTFFLKAIEEGAEGVMVKAVHRDSVYTAGVRGWLWVKLKRDYKSEMMDTVDLVVVGAFYGRGKRGGKLSSLLMAAYDPDRDVFPTVCKVATGFTDEELDRMNEMLKKHIIPRKHPRVESRIEPDVWVEPALVAEILGAELTLSPMHTCCLNTVRPGVGISIRFPRFIRWRDDKSPEDATTTHELLEMYKRQLRRVEEPAEQV.

Glu262 is a binding site for ATP. Lys264 acts as the N6-AMP-lysine intermediate in catalysis. Arg269, Arg284, Glu314, Phe354, Arg431, and Lys437 together coordinate ATP.

It belongs to the ATP-dependent DNA ligase family. Monomer. The cofactor is Mg(2+). Requires Mn(2+) as cofactor.

It carries out the reaction ATP + (deoxyribonucleotide)n-3'-hydroxyl + 5'-phospho-(deoxyribonucleotide)m = (deoxyribonucleotide)n+m + AMP + diphosphate.. It catalyses the reaction ADP + (deoxyribonucleotide)n-3'-hydroxyl + 5'-phospho-(deoxyribonucleotide)m = (deoxyribonucleotide)n+m + AMP + phosphate.. The catalysed reaction is GTP + (deoxyribonucleotide)n-3'-hydroxyl + 5'-phospho-(deoxyribonucleotide)m = (deoxyribonucleotide)n+m + GMP + diphosphate.. Inhibited in the presence of 100 mM KCl, NaCl or NH(4)Cl. DNA ligase that seals nicks in double-stranded DNA during DNA replication, DNA recombination and DNA repair. Can also use ADP, but not NAD(+). This Aeropyrum pernix (strain ATCC 700893 / DSM 11879 / JCM 9820 / NBRC 100138 / K1) protein is DNA ligase.